The primary structure comprises 218 residues: Ohanin-like protein (218 aa).

Positions 1 to 40 are cleaved as a signal peptide; sequence MSPSAGFQFSLYFLQTKKVLWKLTGLCYILLFTLCFFADQ. A propeptide spanning residues 41-48 is cleaved from the precursor; that stretch reads ENGGKALA. The B30.2/SPRY domain maps to 49 to 155; the sequence is SPPGIWKRAD…RIWQTGLWWL (107 aa). A propeptide spanning residues 156–218 is cleaved from the precursor; the sequence is RHLETDPGRV…LGGTVSLTTL (63 aa).

The protein belongs to the ohanin/vespryn family. Expressed by the venom gland.

Its subcellular location is the secreted. Its function is as follows. Neurotoxin that produces dose-dependent hypolocomotion and hyperalgesia in mice. May directly act on the central nervous system, as it is 6500-fold more potent when administered intracerebroventricularly than intraperitoneal. The sequence is that of Ohanin-like protein from Lachesis muta muta (Bushmaster).